Reading from the N-terminus, the 115-residue chain is NADH-ubiquinone oxidoreductase chain 3 (115 aa).

Helical transmembrane passes span M1–L21, I58–I78, and I84–Y104.

This sequence belongs to the complex I subunit 3 family.

The protein localises to the mitochondrion membrane. It carries out the reaction a ubiquinone + NADH + 5 H(+)(in) = a ubiquinol + NAD(+) + 4 H(+)(out). Functionally, core subunit of the mitochondrial membrane respiratory chain NADH dehydrogenase (Complex I) that is believed to belong to the minimal assembly required for catalysis. Complex I functions in the transfer of electrons from NADH to the respiratory chain. The immediate electron acceptor for the enzyme is believed to be ubiquinone. This Locusta migratoria (Migratory locust) protein is NADH-ubiquinone oxidoreductase chain 3 (ND3).